Consider the following 521-residue polypeptide: GMC-type oxidoreductase acuG (521 aa).

FAD is bound by residues 14–15 (TV), 34–35 (EA), Leu82, 90–93 (NYGL), Ala492, and 503–504 (YQ).

This sequence belongs to the GMC oxidoreductase family. It depends on FAD as a cofactor.

The protein operates within secondary metabolite biosynthesis. Functionally, GMC-type oxidoreductase; part of the gene cluster that mediates the biosynthesis of aculins. The pathway begins with the synthesis of 6-methylsalicylic acid by the polyketide synthase (PKS) acuA via condensation of acetate and malonate units. The 6-methylsalicylic acid decarboxylase acuB then catalyzes the decarboxylation of 6-methylsalicylic acid to yield m-cresol (also known as 3-methylphenol). These first reactions occur in the cytosol. The intermediate m-cresol is then transported into the endoplasmic reticulum where the cytochrome P450 monooxygenase acuC converts it to m-hydroxybenzyl alcohol, which is further converted to gentisyl alcohol by the cytochrome P450 monooxygenase acuD. Gentisyl alcohol is further oxidized by the oxidoreductase acuE that probably catalyzes hydroxylation of the aromatic ring. The aromatic system might then be opened by oxidation through a Baeyer-Villiger type of oxidation, which could be catalyzed by acuF, with the carboxylic acid at C-1 subsequently reduced to an aldehyde by acuG. Subsequently, a hemiacetal is formed, before the dehydrogenase acuH would reduce the double bond between C-4 and C-6. Finally, keto-enol tautomerism results in formation of aculinic acid, which exists as two diastereomers (both R/S configurations at C-1) by non-enzymatic hemiacetal formation. The carboxypeptidase acuI could be involved in the linking of aculinic acid to an aculene A moiety produced by the aculene biosynthesis cluster and which leads to the production of aculin A. AcuI may also be involved in the attachment of proline to aculinic acid to form epi-aculins A and B. The protein is GMC-type oxidoreductase acuG of Aspergillus aculeatus (strain ATCC 16872 / CBS 172.66 / WB 5094).